The sequence spans 410 residues: Arginine biosynthesis bifunctional protein ArgJ (410 aa).

Residues Thr-158, Lys-184, Thr-195, Glu-282, Asn-405, and Thr-410 each contribute to the substrate site. The active-site Nucleophile is the Thr-195.

It belongs to the ArgJ family. Heterotetramer of two alpha and two beta chains.

The protein resides in the cytoplasm. The enzyme catalyses N(2)-acetyl-L-ornithine + L-glutamate = N-acetyl-L-glutamate + L-ornithine. It catalyses the reaction L-glutamate + acetyl-CoA = N-acetyl-L-glutamate + CoA + H(+). It functions in the pathway amino-acid biosynthesis; L-arginine biosynthesis; L-ornithine and N-acetyl-L-glutamate from L-glutamate and N(2)-acetyl-L-ornithine (cyclic): step 1/1. Its pathway is amino-acid biosynthesis; L-arginine biosynthesis; N(2)-acetyl-L-ornithine from L-glutamate: step 1/4. Functionally, catalyzes two activities which are involved in the cyclic version of arginine biosynthesis: the synthesis of N-acetylglutamate from glutamate and acetyl-CoA as the acetyl donor, and of ornithine by transacetylation between N(2)-acetylornithine and glutamate. The protein is Arginine biosynthesis bifunctional protein ArgJ of Rhodopirellula baltica (strain DSM 10527 / NCIMB 13988 / SH1).